The following is a 378-amino-acid chain: MAILCTTTSPAEKEHEPKQDLEKDQTSPLIFNPSLLNLQSQIPNQFIWPDEEKPSIDIPELNVPFIDLSSQDSTLEAPRVIAEACTKHGFFLVVNHGVSESLIADAHRLMESFFDMPLAGKQKAQRKPGESCGYASSFTGRFSTKLPWKETLSFQFSNDNSGSRTVQDYFSDTLGQEFEQFGKVYQDYCEAMSSLSLKIMELLGLSLGVNRDYFRGFFEENDSIMRLNHYPPCQTPDLTLGTGPHCDPSSLTILHQDHVNGLQVFVDNQWQSIRPNPKAFVVNIGDTFMALSNGIFKSCLHRAVVNRESARKSMAFFLCPKKDKVVKPPSDILEKMKTRKYPDFTWSMFLEFTQKHYRADVNTLDSFSNWVITNNNPI.

Positions 1 to 10 (MAILCTTTSP) are enriched in polar residues. The disordered stretch occupies residues 1 to 26 (MAILCTTTSPAEKEHEPKQDLEKDQT). A compositionally biased stretch (basic and acidic residues) spans 11 to 25 (AEKEHEPKQDLEKDQ). One can recognise a Fe2OG dioxygenase domain in the interval 220-320 (ENDSIMRLNH…RKSMAFFLCP (101 aa)). Fe cation-binding residues include histidine 245, aspartate 247, and histidine 301. Residue arginine 311 is part of the active site.

The protein belongs to the iron/ascorbate-dependent oxidoreductase family. GA20OX subfamily. Requires Fe(2+) as cofactor. L-ascorbate serves as cofactor. Expressed in inflorescence and developing siliques. Detected in seeds, roots, cotyledons and leaves. In seeds, specifically detected at the rim of the embryo and the outer integument.

The enzyme catalyses gibberellin A12 + 2 2-oxoglutarate + 3 O2 + H(+) = gibberellin A9 + 2 succinate + 3 CO2 + 2 H2O. It catalyses the reaction gibberellin A12 + 2-oxoglutarate + O2 = gibberellin A15 + succinate + CO2. It carries out the reaction gibberellin A15 + 2-oxoglutarate + O2 = gibberellin A24 + succinate + CO2 + H2O. The catalysed reaction is gibberellin A53 + 2-oxoglutarate + O2 = gibberellin A44 + succinate + CO2. The enzyme catalyses gibberellin A12 + 3 2-oxoglutarate + 3 O2 = gibberellin A25 + 3 succinate + 3 CO2 + H2O + H(+). The protein operates within plant hormone biosynthesis; gibberellin biosynthesis. Its function is as follows. Key oxidase enzyme in the biosynthesis of gibberellin that catalyzes the conversion of GA12 to GA9, via a three-step oxidation at C-20 of the GA skeleton, and GA25 is also formed as a minor product. GA53 is less effectively oxidized than GA12 and is only oxidized one step to GA44. Involved in the promotion of the floral transition, fertility and silique elongation, but plays only a minor role in elongation of seedling organs. Acts redundantly with GA20OX1. This is Gibberellin 20 oxidase 2 (GA20OX2) from Arabidopsis thaliana (Mouse-ear cress).